The primary structure comprises 115 residues: Large ribosomal subunit protein P2z (115 aa).

A disordered region spans residues 62 to 115; that stretch reads LASVPSGGGGGVAVASATSGGGGGGGAPAAESKKEEKKEEKEESDDDMGFSLFE. Positions 92-102 are enriched in basic and acidic residues; it reads ESKKEEKKEEK. S105 carries the phosphoserine modification.

The protein belongs to the eukaryotic ribosomal protein P1/P2 family. In terms of assembly, P1 and P2 exist as dimers at the large ribosomal subunit. Post-translationally, phosphorylated.

Its function is as follows. Plays an important role in the elongation step of protein synthesis. In Arabidopsis thaliana (Mouse-ear cress), this protein is Large ribosomal subunit protein P2z (RPP2A).